A 262-amino-acid chain; its full sequence is Dihydroorotate dehydrogenase B (NAD(+)), electron transfer subunit (262 aa).

The region spanning 2-102 (SKVFDAKVLA…MGPLGRGFTL (101 aa)) is the FAD-binding FR-type domain. FAD contacts are provided by residues 53-56 (RPIS), 70-72 (LFR), and 77-78 (GT). The [2Fe-2S] cluster site is built by cysteine 224, cysteine 229, cysteine 232, and cysteine 248.

This sequence belongs to the PyrK family. As to quaternary structure, heterotetramer of 2 PyrK and 2 PyrD type B subunits. However, the metal reductase complex seems to be composed of a heterooctamer of 4 PyrK and 4 PyrD subunits. The cofactor is FAD. It depends on [2Fe-2S] cluster as a cofactor.

It localises to the cytoplasm. The protein operates within pyrimidine metabolism; UMP biosynthesis via de novo pathway; orotate from (S)-dihydroorotate (NAD(+) route): step 1/1. Its function is as follows. Responsible for channeling the electrons from the oxidation of dihydroorotate from the FMN redox center in the PyrD type B subunit to the ultimate electron acceptor NAD(+). In terms of biological role, together with PyrD, also forms a metal reductase complex able to reduce Fe(III)-chelates to Fe(II)-chelates, as well as soluble Cr(VI) and U(VI), using NADH as electron donor. To a lesser extent, can also use NADPH as an electron donor. Is unable to reduce riboflavin and FMN with NADH as electron donor. May have an in vivo role in metal reduction in D.reducens, which is an organism capable of reducing contaminant heavy metals and radionuclides. This is Dihydroorotate dehydrogenase B (NAD(+)), electron transfer subunit from Desulforamulus reducens (strain ATCC BAA-1160 / DSM 100696 / MI-1) (Desulfotomaculum reducens).